The chain runs to 398 residues: Acetate kinase (398 aa).

Residue Asn9 coordinates Mg(2+). Lys16 is an ATP binding site. Arg90 is a binding site for substrate. Asp147 serves as the catalytic Proton donor/acceptor. ATP-binding positions include 207 to 211, 282 to 284, and 330 to 334; these read HIGNG, DLR, and GVGEN. Glu384 is a binding site for Mg(2+).

This sequence belongs to the acetokinase family. Homodimer. It depends on Mg(2+) as a cofactor. Mn(2+) serves as cofactor.

The protein localises to the cytoplasm. It catalyses the reaction acetate + ATP = acetyl phosphate + ADP. Its pathway is metabolic intermediate biosynthesis; acetyl-CoA biosynthesis; acetyl-CoA from acetate: step 1/2. Its function is as follows. Catalyzes the formation of acetyl phosphate from acetate and ATP. Can also catalyze the reverse reaction. This is Acetate kinase from Staphylococcus haemolyticus (strain JCSC1435).